Here is a 144-residue protein sequence, read N- to C-terminus: Nucleoside diphosphate kinase (144 aa).

Positions 11, 59, 87, 93, 104, and 114 each coordinate ATP. The Pros-phosphohistidine intermediate role is filled by histidine 117.

Belongs to the NDK family. As to quaternary structure, homotetramer. Mg(2+) is required as a cofactor.

Its subcellular location is the cytoplasm. It carries out the reaction a 2'-deoxyribonucleoside 5'-diphosphate + ATP = a 2'-deoxyribonucleoside 5'-triphosphate + ADP. The enzyme catalyses a ribonucleoside 5'-diphosphate + ATP = a ribonucleoside 5'-triphosphate + ADP. Functionally, major role in the synthesis of nucleoside triphosphates other than ATP. The ATP gamma phosphate is transferred to the NDP beta phosphate via a ping-pong mechanism, using a phosphorylated active-site intermediate. The protein is Nucleoside diphosphate kinase of Baumannia cicadellinicola subsp. Homalodisca coagulata.